The chain runs to 357 residues: Mating-type protein MAT-1 (357 aa).

Residues 53-108 constitute a DNA-binding region (alpha box); the sequence is RAKRPLNAFMAFRTYYLKLFPDTQQKNASGFLTQLWGGDPHRNKWALIAKVYSFLR.

This sequence belongs to the MATALPHA1 family.

Its subcellular location is the nucleus. In terms of biological role, mating type proteins are sequence specific DNA-binding proteins that act as master switches in fungal differentiation by controlling gene expression in a cell type-specific fashion. Transcriptional activator that induces the transcription of alpha-specific genes. This Fusarium oxysporum (Fusarium vascular wilt) protein is Mating-type protein MAT-1 (MAT1).